A 194-amino-acid chain; its full sequence is Cell division protein SepF (194 aa).

Disordered regions lie at residues 35–54 and 159–194; these read DHRS…DSSP and SAPS…AGGL.

This sequence belongs to the SepF family. As to quaternary structure, homodimer. Interacts with FtsZ.

It localises to the cytoplasm. Cell division protein that is part of the divisome complex and is recruited early to the Z-ring. Probably stimulates Z-ring formation, perhaps through the cross-linking of FtsZ protofilaments. Its function overlaps with FtsA. This is Cell division protein SepF from Prochlorococcus marinus (strain MIT 9313).